A 916-amino-acid polypeptide reads, in one-letter code: MGTETVSKPVMDNGSGDSDDDKPLAFKRNNTVASNSNQSKSNSQRSKAVPTTKVSPMRSPVTSPNGTTPSNKTSIVKSSMPSSSSKASPAKSPLRNDMPSTVKDRSQLQKDQSECKIEHEDSEDDRPLSSILSGNKGPTSSRQVSSPQPEKKNNGDRPLDRASRIIKDESDDETPISSMFRKKIDSGMSGGNQLSNDEKKPLVQKLHQNGSTVKNEVPNGKVLGKRPLEKNSSADQSSLKKAKISASPTSVKMKQDSVKKEIDDKGRVLVSPKMKAKQLSTREDGTDDDDDDDVPISKRFKSDSSNSNTSSAKPKAVKLNSTSSAAKPKARNVVSPRSRAMTKNTKKVTKDSKYSTSSKSSPSSGDGQKKWTTLVHNGVIFPPPYKPHGIKILYKGKPVDLTIEQEEVATMFAVMRETDYYTKPQFRENFWNDWRRLLGKKHVIQKLDDCDFTPIYEWHLEEKEKKKQMSTEEKKALKEEKMKQEEKYMWAVVDGVKEKIGNFRVEPPGLFRGRGEHPKMGKLKKRIHPCEITLNIGKGAPIPECPIAGERWKEVKHDNTVTWLAFWADPINPKEFKYVFLGAGSSLKGLSDKEKYEKARNLTDHIDNIRTTYTKNFTAKDVKMRQIAVATYLIDKLALRAGNEKDDDEADTVGCCTLKVGNVECIPPNKIKFDFLGKDSIQYVNTVEVEPLVYKAIGQFQAGKSKTDDLFDELDTSKLNAHLKELVPGLTAKVFRTYNASITLDEMLSQETKDGDVTQKIVVYQKANKEVAIICNHQRTVSKTHGAQIEKLTARIEELKEVLKELKTNLDRAKKGKPPLEGSDGKKIRSLEPNAWEKKIAQQSAKIEKMERDMHTKEDLKTVALGTSKINYLDPRITVAWCKRHEVPIEKIFTKSLLEKFAWAMDVEPEYRFSRR.

The disordered stretch occupies residues 1 to 369 (MGTETVSKPV…SSPSSGDGQK (369 aa)). Residues 34 to 47 (SNSNQSKSNSQRSK) are compositionally biased toward low complexity. The segment covering 60–76 (PVTSPNGTTPSNKTSIV) has biased composition (polar residues). Residues 77 to 93 (KSSMPSSSSKASPAKSP) are compositionally biased toward low complexity. The segment covering 102 to 119 (VKDRSQLQKDQSECKIEH) has biased composition (basic and acidic residues). The segment covering 130–148 (SILSGNKGPTSSRQVSSPQ) has biased composition (polar residues). Residues 149 to 168 (PEKKNNGDRPLDRASRIIKD) show a composition bias toward basic and acidic residues. Ser170 bears the Phosphoserine mark. A compositionally biased stretch (polar residues) spans 230–239 (KNSSADQSSL). Residues 253–267 (MKQDSVKKEIDDKGR) are compositionally biased toward basic and acidic residues. Residues 285–294 (GTDDDDDDDV) show a composition bias toward acidic residues. A Phosphothreonine modification is found at Thr286. Low complexity predominate over residues 354-366 (YSTSSKSSPSSGD). 3 interaction with DNA regions span residues 577 to 578 (KY), 640 to 645 (RAGNEK), and 731 to 733 (TAK). A Topo IB-type catalytic domain is found at 584–914 (GSSLKGLSDK…MDVEPEYRFS (331 aa)). The stretch at 778 to 860 (QRTVSKTHGA…ERDMHTKEDL (83 aa)) forms a coiled coil. Tyr872 serves as the catalytic O-(3'-phospho-DNA)-tyrosine intermediate.

Belongs to the type IB topoisomerase family. Interacts with DEK3. Expressed in inflorescence meristems. Expressed in primordia of sepals, petals, stamens, carpels and ovules. Expressed in midstage embryos.

The protein resides in the nucleus. The catalysed reaction is ATP-independent breakage of single-stranded DNA, followed by passage and rejoining.. Its function is as follows. Releases the supercoiling and torsional tension of DNA introduced during the DNA replication and transcription by transiently cleaving and rejoining one strand of the DNA duplex. Introduces a single-strand break via transesterification at a target site in duplex DNA. The scissile phosphodiester is attacked by the catalytic tyrosine of the enzyme, resulting in the formation of a DNA-(3'-phosphotyrosyl)-enzyme intermediate and the expulsion of a 5'-OH DNA strand. The free DNA strand then rotates around the intact phosphodiester bond on the opposing strand, thus removing DNA supercoils. Finally, in the religation step, the DNA 5'-OH attacks the covalent intermediate to expel the active-site tyrosine and restore the DNA phosphodiester backbone. Can complement a TOP1-deficient yeast mutant. Plays a critical role in the maintenance of a regular pattern of organ initiation. Topoisomerases I enzymes (TOP1A and TOP1B) are essential for plant survival. Functions together with the stem cell maintenance gene WUSCHEL (WUS) in stem cell regulation. Required to maintain developmentally regulated gene repression. Functions synergistically with chromatin remodeling factors. Is required for the repression of WUS expression in flower development. Plays a role in polycomb group (PcG) protein-mediated histone H3 trimethylation on 'Lys-27' (H3K27me3) at the WUS gene locus. H3K27me3 induces transcriptional repression of WUS. May assist AGAMOUS (AG) in recruiting PcG proteins to WUS locus. Reduces nucleosome density, especially at genes that are targets of PcG proteins. Plays a role in epigenetic silencing. Involved in RNA-directed DNA methylation (RdDM) by promoting Pol V transcription to generate long non-coding RNA transcripts. Is dispensable for Pol IV-mediated small interfering RNA (siRNA) biogenesis. Promotes transposable element (TE) silencing at endogenous RdDM target loci through histone H3 dimethylation of 'Lys-9' (H3K9me2). Promotes the production of Pol V-dependent long non-coding transcripts that facilitate the recruitment of siRNA-AGO4 and AGO4 occupancy at TEs. This Arabidopsis thaliana (Mouse-ear cress) protein is DNA topoisomerase 1 alpha.